A 217-amino-acid polypeptide reads, in one-letter code: 3,4-dihydroxy-2-butanone 4-phosphate synthase (217 aa).

Residues 40–41 (RE), aspartate 45, 153–157 (RRGHT), and glutamate 177 each bind D-ribulose 5-phosphate. Glutamate 41 provides a ligand contact to Mg(2+). Residue histidine 156 coordinates Mg(2+).

This sequence belongs to the DHBP synthase family. Homodimer. It depends on Mg(2+) as a cofactor. Mn(2+) serves as cofactor.

The catalysed reaction is D-ribulose 5-phosphate = (2S)-2-hydroxy-3-oxobutyl phosphate + formate + H(+). The protein operates within cofactor biosynthesis; riboflavin biosynthesis; 2-hydroxy-3-oxobutyl phosphate from D-ribulose 5-phosphate: step 1/1. In terms of biological role, catalyzes the conversion of D-ribulose 5-phosphate to formate and 3,4-dihydroxy-2-butanone 4-phosphate. This is 3,4-dihydroxy-2-butanone 4-phosphate synthase from Aliivibrio fischeri (Vibrio fischeri).